A 369-amino-acid polypeptide reads, in one-letter code: S-(hydroxymethyl)glutathione dehydrogenase (369 aa).

Residues cysteine 40, histidine 62, cysteine 92, cysteine 95, cysteine 98, cysteine 106, and cysteine 169 each contribute to the Zn(2+) site.

The protein belongs to the zinc-containing alcohol dehydrogenase family. Class-III subfamily. As to quaternary structure, homodimer. Zn(2+) is required as a cofactor.

Its subcellular location is the cytoplasm. The catalysed reaction is S-(hydroxymethyl)glutathione + NADP(+) = S-formylglutathione + NADPH + H(+). It carries out the reaction S-(hydroxymethyl)glutathione + NAD(+) = S-formylglutathione + NADH + H(+). It catalyses the reaction a primary alcohol + NAD(+) = an aldehyde + NADH + H(+). The enzyme catalyses a secondary alcohol + NAD(+) = a ketone + NADH + H(+). The catalysed reaction is S-nitrosoglutathione + NADH + H(+) = S-(hydroxysulfenamide)glutathione + NAD(+). In terms of biological role, has high formaldehyde dehydrogenase activity in the presence of glutathione and catalyzes the oxidation of normal alcohols in a reaction that is not GSH-dependent. In addition, hemithiolacetals other than those formed from GSH, including omega-thiol fatty acids, also are substrates. Also acts as a S-nitroso-glutathione reductase by catalyzing the NADH-dependent reduction of S-nitrosoglutathione. In Escherichia coli O6:H1 (strain CFT073 / ATCC 700928 / UPEC), this protein is S-(hydroxymethyl)glutathione dehydrogenase (frmA).